The primary structure comprises 639 residues: ATP-dependent rRNA helicase spb4 (639 aa).

Residues 14–42 (WEAVSPSLSEWVLDAVASWGFSKMTPVQA) carry the Q motif motif. In terms of domain architecture, Helicase ATP-binding spans 45–249 (IPLFMAHKDV…RVGLRNPVKV (205 aa)). 58-65 (AVTGSGKT) contributes to the ATP binding site. A DEAD box motif is present at residues 197–200 (DEAD). A Helicase C-terminal domain is found at 283–437 (TLRPILTSLQ…PISISDSDAS (155 aa)). Positions 521 to 624 (AYKDKQREKR…LRRAEKAAGK (104 aa)) form a coiled coil. Positions 536-639 (QESAEAGAQQ…GDDDEFEGFD (104 aa)) are disordered. The segment covering 575–622 (KHLQQEKRRWEKMTEEEKQKARETQKMLEEIRQKNEEARALRRAEKAA) has biased composition (basic and acidic residues). Residues 628-639 (NDGDDDEFEGFD) are compositionally biased toward acidic residues.

The protein belongs to the DEAD box helicase family. DDX55/SPB4 subfamily. Component of pre-60S ribosomal complexes.

The protein localises to the nucleus. It localises to the nucleolus. The catalysed reaction is ATP + H2O = ADP + phosphate + H(+). Functionally, ATP-binding RNA helicase involved in the biogenesis of 60S ribosomal subunits. Binds 90S pre-ribosomal particles and dissociates from pre-60S ribosomal particles after processing of 27SB pre-rRNA. Required for the normal formation of 18S rRNA through the processing of pre-rRNAs at sites A0, A1 and A2, and the normal formation of 25S and 5.8S rRNAs through the processing of pre-rRNAs at sites C1 and C2. This is ATP-dependent rRNA helicase spb4 from Aspergillus terreus (strain NIH 2624 / FGSC A1156).